A 178-amino-acid chain; its full sequence is Large ribosomal subunit protein uL6 (178 aa).

This sequence belongs to the universal ribosomal protein uL6 family. Part of the 50S ribosomal subunit.

In terms of biological role, this protein binds to the 23S rRNA, and is important in its secondary structure. It is located near the subunit interface in the base of the L7/L12 stalk, and near the tRNA binding site of the peptidyltransferase center. This Natranaerobius thermophilus (strain ATCC BAA-1301 / DSM 18059 / JW/NM-WN-LF) protein is Large ribosomal subunit protein uL6.